The primary structure comprises 321 residues: Aspartate carbamoyltransferase catalytic subunit (321 aa).

Arg-64 and Thr-65 together coordinate carbamoyl phosphate. Residue Lys-92 participates in L-aspartate binding. Carbamoyl phosphate is bound by residues Arg-114, His-142, and Gln-145. Residues Arg-175 and Arg-229 each contribute to the L-aspartate site. Residues Gly-270 and Pro-271 each contribute to the carbamoyl phosphate site.

This sequence belongs to the aspartate/ornithine carbamoyltransferase superfamily. ATCase family. Heterododecamer (2C3:3R2) of six catalytic PyrB chains organized as two trimers (C3), and six regulatory PyrI chains organized as three dimers (R2).

The catalysed reaction is carbamoyl phosphate + L-aspartate = N-carbamoyl-L-aspartate + phosphate + H(+). The protein operates within pyrimidine metabolism; UMP biosynthesis via de novo pathway; (S)-dihydroorotate from bicarbonate: step 2/3. Its function is as follows. Catalyzes the condensation of carbamoyl phosphate and aspartate to form carbamoyl aspartate and inorganic phosphate, the committed step in the de novo pyrimidine nucleotide biosynthesis pathway. The chain is Aspartate carbamoyltransferase catalytic subunit from Azorhizobium caulinodans (strain ATCC 43989 / DSM 5975 / JCM 20966 / LMG 6465 / NBRC 14845 / NCIMB 13405 / ORS 571).